Here is a 58-residue protein sequence, read N- to C-terminus: MLKITQIRSSIGCIPKHKATLRGLGLRRIGNTVSKIDTPSVRGMINLVLYMIQVKRQD.

The protein belongs to the universal ribosomal protein uL30 family. Part of the 50S ribosomal subunit.

The protein is Large ribosomal subunit protein uL30 of Blochmanniella floridana.